A 213-amino-acid polypeptide reads, in one-letter code: Large ribosomal subunit protein uL1 (213 aa).

Belongs to the universal ribosomal protein uL1 family. In terms of assembly, part of the 50S ribosomal subunit.

Binds directly to 23S rRNA. Probably involved in E site tRNA release. In terms of biological role, protein L1 is also a translational repressor protein, it controls the translation of its operon by binding to its mRNA. The chain is Large ribosomal subunit protein uL1 from Methanoculleus marisnigri (strain ATCC 35101 / DSM 1498 / JR1).